A 238-amino-acid chain; its full sequence is Ribosomal RNA small subunit methyltransferase G (238 aa).

Residues Gly-77, Phe-82, 128 to 129 (AE), and Arg-146 contribute to the S-adenosyl-L-methionine site. The tract at residues 216–238 (KKRQTPKKYPRKPGTPNKEPLLK) is disordered.

This sequence belongs to the methyltransferase superfamily. RNA methyltransferase RsmG family.

The protein localises to the cytoplasm. Its function is as follows. Specifically methylates the N7 position of guanine in position 535 of 16S rRNA. This is Ribosomal RNA small subunit methyltransferase G from Macrococcus caseolyticus (strain JCSC5402) (Macrococcoides caseolyticum).